The sequence spans 696 residues: Verrucotoxin subunit beta (696 aa).

The region spanning 506-696 (HMPGVETIKD…GCTTESQWSN (191 aa)) is the B30.2/SPRY domain.

The protein belongs to the SNTX/VTX toxin family. As to quaternary structure, tetramer composed of 2 alpha and 2 beta subunits. Glycosylated. As to expression, expressed by the venom gland.

The protein localises to the secreted. Its function is as follows. This lethal (towards mice) toxin induces hemolytic, cytolytic and hypotensive activities. Inhibits calcium channels and may activate ATP-sensitive potassium channels in frog atrial heart muscle. In guinea-pig ventricular myocytes, it modulates calcium channel activity through the beta-adrenoceptor-cAMP-PKA pathway (ADRB). This chain is Verrucotoxin subunit beta, found in Synanceia verrucosa (Reef stonefish).